A 370-amino-acid polypeptide reads, in one-letter code: D-alanine--D-alanine ligase (370 aa).

Residues 142–348 (KQILTHHHIQ…YTALIDQLIQ (207 aa)) enclose the ATP-grasp domain. Position 172-227 (172-227 (QAHVGDHLFIKPANQGSSIGIHKAENEQEYLDGLADAFKYDYKILVEESIDNPREV)) interacts with ATP. Mg(2+)-binding residues include aspartate 302, glutamate 315, and asparagine 317.

The protein belongs to the D-alanine--D-alanine ligase family. Mg(2+) serves as cofactor. Requires Mn(2+) as cofactor.

Its subcellular location is the cytoplasm. The catalysed reaction is 2 D-alanine + ATP = D-alanyl-D-alanine + ADP + phosphate + H(+). It participates in cell wall biogenesis; peptidoglycan biosynthesis. Its function is as follows. Cell wall formation. This Lactiplantibacillus plantarum (strain ATCC BAA-793 / NCIMB 8826 / WCFS1) (Lactobacillus plantarum) protein is D-alanine--D-alanine ligase.